Consider the following 200-residue polypeptide: 3-isopropylmalate dehydratase small subunit (200 aa).

It belongs to the LeuD family. LeuD type 1 subfamily. Heterodimer of LeuC and LeuD.

It catalyses the reaction (2R,3S)-3-isopropylmalate = (2S)-2-isopropylmalate. It functions in the pathway amino-acid biosynthesis; L-leucine biosynthesis; L-leucine from 3-methyl-2-oxobutanoate: step 2/4. In terms of biological role, catalyzes the isomerization between 2-isopropylmalate and 3-isopropylmalate, via the formation of 2-isopropylmaleate. The protein is 3-isopropylmalate dehydratase small subunit of Actinobacillus pleuropneumoniae serotype 7 (strain AP76).